A 464-amino-acid chain; its full sequence is NADH-quinone oxidoreductase subunit N (464 aa).

Transmembrane regions (helical) follow at residues 6 to 26 (FLYI…LVLG), 36 to 56 (SMSL…LIYF), 75 to 95 (CLAR…FFFA), 101 to 121 (YEFA…VEAH), 123 to 143 (FLSF…LVCF), 157 to 177 (FFVL…LVYG), 197 to 217 (LGAT…LGAV), 231 to 253 (PTVA…FAGL), 257 to 279 (VVIP…MVVG), 293 to 313 (FAYA…TGVV), 317 to 337 (PVLF…TVLL), 360 to 380 (AFTF…SGFF), 395 to 415 (FGVP…IPCF), and 439 to 459 (NVGL…VVLL).

This sequence belongs to the complex I subunit 2 family. NDH-1 is composed of 14 different subunits. Subunits NuoA, H, J, K, L, M, N constitute the membrane sector of the complex.

The protein resides in the cell inner membrane. It catalyses the reaction a quinone + NADH + 5 H(+)(in) = a quinol + NAD(+) + 4 H(+)(out). In terms of biological role, NDH-1 shuttles electrons from NADH, via FMN and iron-sulfur (Fe-S) centers, to quinones in the respiratory chain. The immediate electron acceptor for the enzyme in this species is believed to be ubiquinone. Couples the redox reaction to proton translocation (for every two electrons transferred, four hydrogen ions are translocated across the cytoplasmic membrane), and thus conserves the redox energy in a proton gradient. This chain is NADH-quinone oxidoreductase subunit N, found in Anaplasma phagocytophilum (strain HZ).